A 144-amino-acid polypeptide reads, in one-letter code: MESPLGSDLARLVRIWRALIDHRLKPLKLTQTHWITLHNICQLPPEQSQIQLAKAIGIEQPSLVRTLDQLEEKSLIIRHTCLNDRRAKRIKLTDNARPVINEVNRVISITRNEIFNGISNEETIFLNKIISKLEKNIINLHNKN.

The HTH marR-type domain maps to 2-135 (ESPLGSDLAR…LNKIISKLEK (134 aa)). The segment at residues 49–72 (QIQLAKAIGIEQPSLVRTLDQLEE) is a DNA-binding region (H-T-H motif).

The protein belongs to the SlyA family. In terms of assembly, homodimer.

In terms of biological role, transcription regulator that can specifically activate or repress expression of target genes. This Blochmanniella pennsylvanica (strain BPEN) protein is Transcriptional regulator SlyA.